Consider the following 90-residue polypeptide: Small ribosomal subunit protein uS19 (90 aa).

This sequence belongs to the universal ribosomal protein uS19 family.

Functionally, protein S19 forms a complex with S13 that binds strongly to the 16S ribosomal RNA. The polypeptide is Small ribosomal subunit protein uS19 (Clostridium beijerinckii (strain ATCC 51743 / NCIMB 8052) (Clostridium acetobutylicum)).